Reading from the N-terminus, the 398-residue chain is Elongation factor Tu (398 aa).

In terms of domain architecture, tr-type G spans 10–207; it reads KPHVNIGTIG…TVDDYIPDPE (198 aa). A G1 region spans residues 19–26; the sequence is GHVDHGKT. 19 to 26 contributes to the GTP binding site; sequence GHVDHGKT. Thr26 contacts Mg(2+). The G2 stretch occupies residues 63–67; the sequence is GITIN. The tract at residues 84–87 is G3; that stretch reads DAPG. Residues 84 to 88 and 139 to 142 each bind GTP; these read DAPGH and NKVD. A G4 region spans residues 139-142; the sequence is NKVD. The interval 177–179 is G5; that stretch reads SAL.

It belongs to the TRAFAC class translation factor GTPase superfamily. Classic translation factor GTPase family. EF-Tu/EF-1A subfamily. As to quaternary structure, monomer.

It localises to the cytoplasm. It catalyses the reaction GTP + H2O = GDP + phosphate + H(+). Its function is as follows. GTP hydrolase that promotes the GTP-dependent binding of aminoacyl-tRNA to the A-site of ribosomes during protein biosynthesis. In Streptococcus mutans serotype c (strain ATCC 700610 / UA159), this protein is Elongation factor Tu.